Here is a 458-residue protein sequence, read N- to C-terminus: Glutamate--tRNA ligase 2 (458 aa).

The short motif at 20–30 (PSPTGLIHVGN) is the 'HIGH' region element. A 'KMSKS' region motif is present at residues 251-255 (GLSKR). Lys254 contributes to the ATP binding site.

The protein belongs to the class-I aminoacyl-tRNA synthetase family. Glutamate--tRNA ligase type 1 subfamily. As to quaternary structure, monomer.

The protein resides in the cytoplasm. The catalysed reaction is tRNA(Glu) + L-glutamate + ATP = L-glutamyl-tRNA(Glu) + AMP + diphosphate. In terms of biological role, catalyzes the attachment of glutamate to tRNA(Glu) in a two-step reaction: glutamate is first activated by ATP to form Glu-AMP and then transferred to the acceptor end of tRNA(Glu). The sequence is that of Glutamate--tRNA ligase 2 from Xanthobacter autotrophicus (strain ATCC BAA-1158 / Py2).